The chain runs to 152 residues: Membrane-spanning 4-domains subfamily A member 13 (152 aa).

A run of 4 helical transmembrane segments spans residues 1–21 (MIGIFHIFMWYFLLVLYMGQI), 32–52 (TYKTGCTLWGIFFIIAGVFLI), 66–86 (TLIINIICIITTITAVTLTII), and 111–131 (ILLFFYGLEFSIALTHSIYSC).

Belongs to the MS4A family.

The protein localises to the membrane. May be involved in signal transduction as a component of a multimeric receptor complex. The protein is Membrane-spanning 4-domains subfamily A member 13 (MS4A13) of Homo sapiens (Human).